The sequence spans 304 residues: Acetaldehyde dehydrogenase 2 (304 aa).

Residue C131 is the Acyl-thioester intermediate of the active site. NAD(+) is bound by residues 162-170 (SAGPGTRKN) and N273.

The protein belongs to the acetaldehyde dehydrogenase family.

It catalyses the reaction acetaldehyde + NAD(+) + CoA = acetyl-CoA + NADH + H(+). The chain is Acetaldehyde dehydrogenase 2 from Dechloromonas aromatica (strain RCB).